A 78-amino-acid polypeptide reads, in one-letter code: UPF0291 protein Exig_1097 (78 aa).

Residues 57 to 78 (EEGTDVTPEKLKQAQEEERNKQ) form a disordered region. Positions 63–78 (TPEKLKQAQEEERNKQ) are enriched in basic and acidic residues.

The protein belongs to the UPF0291 family.

It localises to the cytoplasm. The chain is UPF0291 protein Exig_1097 from Exiguobacterium sibiricum (strain DSM 17290 / CCUG 55495 / CIP 109462 / JCM 13490 / 255-15).